The chain runs to 91 residues: MGDFNLVGVIRVMPTDPEVNLDELEEKLKALIPEKYGLAKVEREPIAFGLVALKFYVLGRDEEGYSFDEIAEKFQEVEEVESAEVETVSRI.

It belongs to the EF-1-beta/EF-1-delta family.

In terms of biological role, promotes the exchange of GDP for GTP in EF-1-alpha/GDP, thus allowing the regeneration of EF-1-alpha/GTP that could then be used to form the ternary complex EF-1-alpha/GTP/AAtRNA. The sequence is that of Elongation factor 1-beta from Pyrococcus furiosus (strain ATCC 43587 / DSM 3638 / JCM 8422 / Vc1).